The following is a 214-amino-acid chain: Pyridoxine/pyridoxamine 5'-phosphate oxidase (214 aa).

Residues 8–11 (RINY) and Lys66 contribute to the substrate site. Residues 61–66 (RIVLIK), 76–77 (FT), Arg82, Lys83, and Gln105 each bind FMN. Residues Tyr123, Arg127, and Ser131 each coordinate substrate. FMN contacts are provided by residues 140–141 (QS) and Trp184. Residue 190 to 192 (RLH) participates in substrate binding. Arg194 is an FMN binding site.

Belongs to the pyridoxamine 5'-phosphate oxidase family. Homodimer. It depends on FMN as a cofactor.

The catalysed reaction is pyridoxamine 5'-phosphate + O2 + H2O = pyridoxal 5'-phosphate + H2O2 + NH4(+). It catalyses the reaction pyridoxine 5'-phosphate + O2 = pyridoxal 5'-phosphate + H2O2. It functions in the pathway cofactor metabolism; pyridoxal 5'-phosphate salvage; pyridoxal 5'-phosphate from pyridoxamine 5'-phosphate: step 1/1. The protein operates within cofactor metabolism; pyridoxal 5'-phosphate salvage; pyridoxal 5'-phosphate from pyridoxine 5'-phosphate: step 1/1. Catalyzes the oxidation of either pyridoxine 5'-phosphate (PNP) or pyridoxamine 5'-phosphate (PMP) into pyridoxal 5'-phosphate (PLP). The sequence is that of Pyridoxine/pyridoxamine 5'-phosphate oxidase from Burkholderia cenocepacia (strain HI2424).